The following is a 385-amino-acid chain: Homoserine O-succinyltransferase (385 aa).

In terms of domain architecture, AB hydrolase-1 spans 45–355 (NAVLVCHALN…PHGHDAFLLD (311 aa)). The active-site Nucleophile is S151. A substrate-binding site is contributed by R221. Active-site residues include D316 and H349. D350 is a binding site for substrate.

The protein belongs to the AB hydrolase superfamily. MetX family. Homodimer.

The protein resides in the cytoplasm. The enzyme catalyses L-homoserine + succinyl-CoA = O-succinyl-L-homoserine + CoA. The protein operates within amino-acid biosynthesis; L-methionine biosynthesis via de novo pathway; O-succinyl-L-homoserine from L-homoserine: step 1/1. Functionally, transfers a succinyl group from succinyl-CoA to L-homoserine, forming succinyl-L-homoserine. The protein is Homoserine O-succinyltransferase of Janthinobacterium sp. (strain Marseille) (Minibacterium massiliensis).